The sequence spans 368 residues: F-box protein At3g17710 (368 aa).

Positions 1-46 (MASVKLPWDLEEEILSRLPPRSLVRFRTVCKHWNGLFSDKRFVKKH) constitute an F-box domain.

The protein is F-box protein At3g17710 of Arabidopsis thaliana (Mouse-ear cress).